Consider the following 180-residue polypeptide: uncharacterized protein (180 aa).

This is an uncharacterized protein from Haemophilus influenzae (strain ATCC 51907 / DSM 11121 / KW20 / Rd).